A 1024-amino-acid polypeptide reads, in one-letter code: NLR family CARD domain-containing protein 4 (1024 aa).

The region spanning 1-88 (MNFIRNNRRA…FVYQDLTGQN (88 aa)) is the CARD domain. The interval 95–298 (EEDLNVLAQN…HVGALTAEVG (204 aa)) is nucleotide-binding domain (NBD). Residues Thr135, 172–177 (GKGKST), and His443 each bind ATP. One can recognise an NACHT domain in the interval 163–476 (SPCLIEGESG…VSKGNSYLNK (314 aa)). The tract at residues 356–463 (AHTQTMLFQT…RLSSLLTSKE (108 aa)) is winged-helix domain (WHD). The residue at position 533 (Ser533) is a Phosphoserine. LRR repeat units lie at residues 578–598 (FFQGKSLYINSENIPDYLFDF), 656–679 (KQEFKTLEVTLRDINKLNKQDIKY), 735–758 (VTGLQNLSIHRLHTQQLPGGLIDS), 762–785 (LKNLERLILDDIRMNEEDAKNLAE), 787–812 (LRSLKKMRLLHLTHLSDIGEGMDYIV), 824–847 (EMKLVACCLTANSVKVLAQNLHNL), 848–870 (IKLSILDISENYLEKDGNEALQE), 878–902 (LGELTTLMLPWCWDVHTSLPKLLKQ), 911–933 (KLGLKNWRLRDEEIKSLGEFLEM), 936–963 (LRDLQQLDLAGHCVSSDGWLYFMNVFEN), 965–985 (KQLVFFDFSTEEFLPDAALVR), and 999–1021 (EVKLTGWEFDDYDISAIKGTFKL).

As to quaternary structure, homooligomer; homooligomerizes following activation of Naip proteins by pathogenic proteins such as S.typhimurium (Salmonella) flagellin or PrgJ. Component of the NLRC4 inflammasome, at least composed of NLRC4, caspase-1 (CASP1) and some NAIP protein (Naip, Naip2 or Naip5). Interacts with Naip5 and Naip6; following Naip5 and Naip6 engagement by Salmonella flagellin. Interacts with Naip2; following Naip2 engagement by Salmonella PrgJ. The inflammasome is a huge complex that contains multiple copies of NLRC4 and a single Naip protein chain. Some NLRC4 inflammasomes contain PYCARD/ASC, while some others directly contact and activate CASP1. Interacts with EIF2AK2/PKR. In terms of processing, phosphorylated at Ser-533 following infection of macrophages with S.typhimurium (Salmonella). Phosphorylation is essential for NLRC4 inflammasome function to promote caspase-1 activation and pyroptosis. PRKCD phosphorylates Ser-533 in vitro. As to expression, expressed by intestinal mononuclear phagocytes.

The protein localises to the cytoplasm. It localises to the cytosol. The protein resides in the inflammasome. Functionally, key component of inflammasomes that indirectly senses specific proteins from pathogenic bacteria and fungi and responds by assembling an inflammasome complex that promotes caspase-1 activation, cytokine production and macrophage pyroptosis. The NLRC4 inflammasome is activated as part of the innate immune response to a range of intracellular bacteria. It senses pathogenic proteins of the type III secretion system (T3SS) and type IV secretion system (T4SS) such as flagellin and PrgJ-like rod proteins via the Naip proteins (Naip1, Naip2 or Naip5): specific Naip proteins recognize and bind pathogenic proteins, driving assembly and activation of the NLRC4 inflammasome. The NLRC4 inflammasome senses Gram-negative bacteria such as L.pneumophila and P.aeruginosa, enteric pathogens S.typhimurium (Salmonella) and S.flexneri and fungal pathogen C.albicans. In intestine, the NLRC4 inflammasome is able to discriminate between commensal and pathogenic bacteria and specifically drives production of interleukin-1 beta (IL1B) in response to infection by Salmonella or P.aeruginosa. In case of L.pneumophila infection the inflammasome acts by activating caspase-7. The chain is NLR family CARD domain-containing protein 4 (Nlrc4) from Mus musculus (Mouse).